Reading from the N-terminus, the 312-residue chain is Aspartate carbamoyltransferase catalytic subunit (312 aa).

Residues R58 and T59 each contribute to the carbamoyl phosphate site. Position 86 (K86) interacts with L-aspartate. The carbamoyl phosphate site is built by R108, H136, and Q139. The L-aspartate site is built by R169 and R223. G264 and P265 together coordinate carbamoyl phosphate.

Belongs to the aspartate/ornithine carbamoyltransferase superfamily. ATCase family. In terms of assembly, heterododecamer (2C3:3R2) of six catalytic PyrB chains organized as two trimers (C3), and six regulatory PyrI chains organized as three dimers (R2).

The enzyme catalyses carbamoyl phosphate + L-aspartate = N-carbamoyl-L-aspartate + phosphate + H(+). Its pathway is pyrimidine metabolism; UMP biosynthesis via de novo pathway; (S)-dihydroorotate from bicarbonate: step 2/3. In terms of biological role, catalyzes the condensation of carbamoyl phosphate and aspartate to form carbamoyl aspartate and inorganic phosphate, the committed step in the de novo pyrimidine nucleotide biosynthesis pathway. This is Aspartate carbamoyltransferase catalytic subunit from Endomicrobium trichonymphae.